Reading from the N-terminus, the 722-residue chain is MVKTPMFHKKIDYISQVDERDCGVAALAMILAHYKTRLSLAKLRDLAKTDMEGTTALGIVKAANALDFETMPIQADLSLFDKKDLPYPFIAHVIKEGKYPHYYVVYGMKGDQLLIADPDNTVGKTKMTKAHFNEEWTGVSIFIAPNPTYKPTKEKKRSLTSFIPVITRQKLLVINIVIAALLVTLVSILGSYYLQGIIDTYIPNNMKNTLGIVSLGLIFAYVIQQLLSYARDYLLIVMGQRLSIDIILSYIKHIFELPMSFFATRRTGEIVSRFTDANAIIEALASTMLSVFLDLGILVIVGTVLVVQNSTLFLISLIAIPAYALVVWLFMRPFSKMNNDQMQAGSMLSSSIIEDINGVETIKALNSEATAYHKIDHEFVTYLEKSFVYAKTEAVQNAIKSLLQLSLNVVILWVGAQLVMTNKISVGQLITYNALLGFFTDPLQNIINLQTKLQQASVANNRLNEVYLVDSEFKDSHQMTEKITPNSSLVADHITYKYGFGAPAIDDVSLTITAGEKIALVGISGSGKSTLVKLLVNFFQPESGTISLGPTPLANLDKHELRGHINYLPQEPFIFSGSIMENLLLGAKPGTTQEDIIRAVEIAEIKDDIEKMSQGFGTELAESGNISGGQKQRIALARAILVDSPVLILDESTSNLDVLTEKKIIDNLMKLTEKTIIFVAHRLTISQRVDRILTMQSGKIIEDGTHDTLLKAGGFYASLFNH.

The Peptidase C39 domain occupies 16-143; that stretch reads QVDERDCGVA…EEWTGVSIFI (128 aa). Residue cysteine 22 is part of the active site. The next 8 membrane-spanning stretches (helical) occupy residues 171–191, 210–230, 242–262, 287–307, 311–331, 401–421, 429–449, and 518–538; these read LLVI…ILGS, LGIV…LSYA, LSID…MSFF, TMLS…VLVV, TLFL…WLFM, SLLQ…LVMT, LITY…IINL, and IALV…LVNF. The region spanning 173–455 is the ABC transmembrane type-1 domain; the sequence is VINIVIAALL…IINLQTKLQQ (283 aa). The ABC transporter domain occupies 489 to 722; sequence LVADHITYKY…GGFYASLFNH (234 aa). 522-529 lines the ATP pocket; it reads GISGSGKS.

The protein belongs to the ABC transporter superfamily.

It localises to the cell membrane. Functionally, involved in the export process of the bacteriocin mesentericin-Y105. The sequence is that of Mesentericin-Y105 transport/processing ATP-binding protein MesD (mesD) from Leuconostoc mesenteroides.